A 111-amino-acid chain; its full sequence is uncharacterized protein (111 aa).

2 helical membrane-spanning segments follow: residues 7 to 29 (LYSSIMYVFFYIRIHTVFLRALY) and 49 to 71 (PSLLMLKIISTPLAFLIPNSINL).

Its subcellular location is the membrane. This is an uncharacterized protein from Saccharomyces cerevisiae (strain ATCC 204508 / S288c) (Baker's yeast).